We begin with the raw amino-acid sequence, 133 residues long: MKFNIDHYIASVLQWILNIALIILSIVLSIFLINETITFIQYIFSTKEYTSYKLVESIIVYFLYFEFIALIIKYFKSNYHFPLRYFIYIGITALIRLIIVSHEEPMETLLYAGAILILVIALYISNMRDLRKE.

4 helical membrane-spanning segments follow: residues 13-33, 55-75, 81-101, and 105-125; these read LQWI…IFLI, VESI…IKYF, FPLR…IIVS, and PMET…LYIS.

This sequence belongs to the PsiE family.

The protein resides in the cell membrane. In Bacillus cereus (strain ATCC 10987 / NRS 248), this protein is Protein PsiE homolog.